We begin with the raw amino-acid sequence, 523 residues long: 2-isopropylmalate synthase (523 aa).

The 263-residue stretch at 5–267 (VIIFDTTLRD…HTAINHQEIW (263 aa)) folds into the Pyruvate carboxyltransferase domain. The Mn(2+) site is built by Asp-14, His-202, His-204, and Asn-238. The interval 392 to 523 (RLDYFSVQSG…QHNENNKETV (132 aa)) is regulatory domain.

This sequence belongs to the alpha-IPM synthase/homocitrate synthase family. LeuA type 1 subfamily. As to quaternary structure, homodimer. Mn(2+) is required as a cofactor.

The protein resides in the cytoplasm. The catalysed reaction is 3-methyl-2-oxobutanoate + acetyl-CoA + H2O = (2S)-2-isopropylmalate + CoA + H(+). The protein operates within amino-acid biosynthesis; L-leucine biosynthesis; L-leucine from 3-methyl-2-oxobutanoate: step 1/4. Functionally, catalyzes the condensation of the acetyl group of acetyl-CoA with 3-methyl-2-oxobutanoate (2-ketoisovalerate) to form 3-carboxy-3-hydroxy-4-methylpentanoate (2-isopropylmalate). This is 2-isopropylmalate synthase from Escherichia coli (strain K12 / MC4100 / BW2952).